Consider the following 590-residue polypeptide: MRKHPQSATKHLFVSGGVASSLGKGLTASSLGQLLTARGLHVTMQKLDPYLNVDPGTMNPFQHGEVFVTEDGAETDLDVGHYERFLDRDLSGSANVTTGQVYSTVIAKERRGEYLGDTVQVIPHITDEIKQRIMAMAQPDGGDNRPDVVITEIGGTVGDIESQPFLEAARQVRHDLGRENVFFLHVSLVPHLAPSGELKTKPTQHSVAALRSIGITPDALILRCDRDVPESLKNKIALMCDVDIDGVISTPDAPSIYDIPKVLHREELDAFVVRRLNLPFRDVDWTEWDDLLRRVHEPHGTVRIALVGKYVDFSDAYLSVSEALHAGGFKHYAKVEVVWVASDDCETATGAAAVLADVHGVLIPGGFGIRGIEGKIGAIRYARARGLPVLGLCLGLQCIVIEATRSVGLVQANSAEFEPATPDPVISTMADQKEIVAGEADFGGTMRLGAYPAVLQPASIVAQAYGTTQVSERHRHRYEVNNAYRDWIAESGLRISGTSPDGYLVEFVEYPANMHPFVVGTQAHPELKSRPTRPHPLFVAFVGAAIDYKSAELLPVEIPAVPEISEHLPNSSNQHRDGVERSFPAPAARG.

An amidoligase domain region spans residues 1–278 (MRKHPQSATK…DAFVVRRLNL (278 aa)). Ser-20 is a CTP binding site. UTP is bound at residue Ser-20. ATP is bound by residues 21–26 (SLGKGL) and Asp-78. Residues Asp-78 and Glu-152 each coordinate Mg(2+). CTP contacts are provided by residues 159–161 (DIE), 199–204 (KTKPTQ), and Lys-235. UTP is bound by residues 199–204 (KTKPTQ) and Lys-235. Residues 303 to 551 (RIALVGKYVD…VGAAIDYKSA (249 aa)) enclose the Glutamine amidotransferase type-1 domain. Gly-366 is a binding site for L-glutamine. The active-site Nucleophile; for glutamine hydrolysis is Cys-393. L-glutamine contacts are provided by residues 394-397 (LGLQ), Glu-416, and Arg-477. Active-site residues include His-524 and Glu-526. Positions 566–590 (EHLPNSSNQHRDGVERSFPAPAARG) are disordered.

It belongs to the CTP synthase family. As to quaternary structure, homotetramer.

It catalyses the reaction UTP + L-glutamine + ATP + H2O = CTP + L-glutamate + ADP + phosphate + 2 H(+). The catalysed reaction is L-glutamine + H2O = L-glutamate + NH4(+). The enzyme catalyses UTP + NH4(+) + ATP = CTP + ADP + phosphate + 2 H(+). It participates in pyrimidine metabolism; CTP biosynthesis via de novo pathway; CTP from UDP: step 2/2. With respect to regulation, allosterically activated by GTP, when glutamine is the substrate; GTP has no effect on the reaction when ammonia is the substrate. The allosteric effector GTP functions by stabilizing the protein conformation that binds the tetrahedral intermediate(s) formed during glutamine hydrolysis. Inhibited by the product CTP, via allosteric rather than competitive inhibition. In terms of biological role, catalyzes the ATP-dependent amination of UTP to CTP with either L-glutamine or ammonia as the source of nitrogen. Regulates intracellular CTP levels through interactions with the four ribonucleotide triphosphates. In Mycobacterium leprae (strain Br4923), this protein is CTP synthase.